We begin with the raw amino-acid sequence, 326 residues long: Elongation factor Ts (326 aa).

An involved in Mg(2+) ion dislocation from EF-Tu region spans residues Thr80 to Val83.

Belongs to the EF-Ts family.

It localises to the cytoplasm. Associates with the EF-Tu.GDP complex and induces the exchange of GDP to GTP. It remains bound to the aminoacyl-tRNA.EF-Tu.GTP complex up to the GTP hydrolysis stage on the ribosome. This chain is Elongation factor Ts, found in Rhodopirellula baltica (strain DSM 10527 / NCIMB 13988 / SH1).